The chain runs to 155 residues: MNQVEIYTDGACKGNPGPGGWGVLLRSGPTEKALFGGALGTTNNRMELMAVIEALSALQRPCAVTLYLDSEYVRKGITEWIHGWKAKGWRTAARQPVKNVDLWQRLDALVSTGGHRIEWRWVKGHSGDPGNERADALANRGVDQALGRGALASAE.

Residues 1 to 143 (MNQVEIYTDG…ADALANRGVD (143 aa)) form the RNase H type-1 domain. Mg(2+) is bound by residues Asp-9, Glu-47, Asp-69, and Asp-135.

This sequence belongs to the RNase H family. In terms of assembly, monomer. Mg(2+) serves as cofactor.

It localises to the cytoplasm. It catalyses the reaction Endonucleolytic cleavage to 5'-phosphomonoester.. Endonuclease that specifically degrades the RNA of RNA-DNA hybrids. The sequence is that of Ribonuclease H from Verminephrobacter eiseniae (strain EF01-2).